A 332-amino-acid polypeptide reads, in one-letter code: MTRFLDSDAMGDEELVERTLRPQYLREYIGQDKVKDQLKIFIEAAKLRDESLDHVLLFGPPGLGKTTMAFVIANELGVNLKQTSGPAIEKSGDLVAILNDLEPGDVLFIDEIHRMPMAVEEVLYSAMEDFYIDIMIGAGETSRSVHLDLPPFTLIGATTRAGMLSNPLRARFGITGHMEYYEENDLTEIIERTADIFEMKITYEAASELARRSRGTPRIANRLLKRVRDYAQIMGDGLIDDNITDKALTMLDVDHEGLDYVDQKILRTMIEMYNGGPVGLGTLSVNIAEERDTVEDMYEPYLIQKGFIMRTRTGRVATVKAYEHLGYQRFDK.

The segment at 1-181 (MTRFLDSDAM…FGITGHMEYY (181 aa)) is large ATPase domain (RuvB-L). Residues L20, R21, G62, K65, T66, T67, 128–130 (EDF), R171, Y181, and R218 each bind ATP. T66 is a binding site for Mg(2+). Positions 182-252 (EENDLTEIIE…ITDKALTMLD (71 aa)) are small ATPAse domain (RuvB-S). The segment at 255-332 (HEGLDYVDQK…EHLGYQRFDK (78 aa)) is head domain (RuvB-H). DNA contacts are provided by R291, R310, R312, and R315.

This sequence belongs to the RuvB family. In terms of assembly, homohexamer. Forms an RuvA(8)-RuvB(12)-Holliday junction (HJ) complex. HJ DNA is sandwiched between 2 RuvA tetramers; dsDNA enters through RuvA and exits via RuvB. An RuvB hexamer assembles on each DNA strand where it exits the tetramer. Each RuvB hexamer is contacted by two RuvA subunits (via domain III) on 2 adjacent RuvB subunits; this complex drives branch migration. In the full resolvosome a probable DNA-RuvA(4)-RuvB(12)-RuvC(2) complex forms which resolves the HJ.

It is found in the cytoplasm. It carries out the reaction ATP + H2O = ADP + phosphate + H(+). In terms of biological role, the RuvA-RuvB-RuvC complex processes Holliday junction (HJ) DNA during genetic recombination and DNA repair, while the RuvA-RuvB complex plays an important role in the rescue of blocked DNA replication forks via replication fork reversal (RFR). RuvA specifically binds to HJ cruciform DNA, conferring on it an open structure. The RuvB hexamer acts as an ATP-dependent pump, pulling dsDNA into and through the RuvAB complex. RuvB forms 2 homohexamers on either side of HJ DNA bound by 1 or 2 RuvA tetramers; 4 subunits per hexamer contact DNA at a time. Coordinated motions by a converter formed by DNA-disengaged RuvB subunits stimulates ATP hydrolysis and nucleotide exchange. Immobilization of the converter enables RuvB to convert the ATP-contained energy into a lever motion, pulling 2 nucleotides of DNA out of the RuvA tetramer per ATP hydrolyzed, thus driving DNA branch migration. The RuvB motors rotate together with the DNA substrate, which together with the progressing nucleotide cycle form the mechanistic basis for DNA recombination by continuous HJ branch migration. Branch migration allows RuvC to scan DNA until it finds its consensus sequence, where it cleaves and resolves cruciform DNA. The polypeptide is Holliday junction branch migration complex subunit RuvB (Streptococcus agalactiae serotype V (strain ATCC BAA-611 / 2603 V/R)).